The sequence spans 342 residues: S-adenosylmethionine:tRNA ribosyltransferase-isomerase (342 aa).

This sequence belongs to the QueA family. In terms of assembly, monomer.

The protein resides in the cytoplasm. It catalyses the reaction 7-aminomethyl-7-carbaguanosine(34) in tRNA + S-adenosyl-L-methionine = epoxyqueuosine(34) in tRNA + adenine + L-methionine + 2 H(+). Its pathway is tRNA modification; tRNA-queuosine biosynthesis. Its function is as follows. Transfers and isomerizes the ribose moiety from AdoMet to the 7-aminomethyl group of 7-deazaguanine (preQ1-tRNA) to give epoxyqueuosine (oQ-tRNA). This Campylobacter jejuni subsp. jejuni serotype O:6 (strain 81116 / NCTC 11828) protein is S-adenosylmethionine:tRNA ribosyltransferase-isomerase.